Consider the following 295-residue polypeptide: Acetylglutamate kinase (295 aa).

Substrate-binding positions include 66 to 67 (GG), R88, and N193.

It belongs to the acetylglutamate kinase family. ArgB subfamily.

The protein localises to the cytoplasm. It carries out the reaction N-acetyl-L-glutamate + ATP = N-acetyl-L-glutamyl 5-phosphate + ADP. It functions in the pathway amino-acid biosynthesis; L-arginine biosynthesis; N(2)-acetyl-L-ornithine from L-glutamate: step 2/4. Catalyzes the ATP-dependent phosphorylation of N-acetyl-L-glutamate. This is Acetylglutamate kinase from Rhizobium leguminosarum bv. trifolii (strain WSM2304).